The chain runs to 283 residues: 4-diphosphocytidyl-2-C-methyl-D-erythritol kinase (283 aa).

The active site involves Lys-10. 99 to 109 provides a ligand contact to ATP; the sequence is PMGGGLGGGSS. Asp-141 is a catalytic residue.

It belongs to the GHMP kinase family. IspE subfamily. Homodimer.

The catalysed reaction is 4-CDP-2-C-methyl-D-erythritol + ATP = 4-CDP-2-C-methyl-D-erythritol 2-phosphate + ADP + H(+). It participates in isoprenoid biosynthesis; isopentenyl diphosphate biosynthesis via DXP pathway; isopentenyl diphosphate from 1-deoxy-D-xylulose 5-phosphate: step 3/6. In terms of biological role, catalyzes the phosphorylation of the position 2 hydroxy group of 4-diphosphocytidyl-2C-methyl-D-erythritol. The protein is 4-diphosphocytidyl-2-C-methyl-D-erythritol kinase of Escherichia coli O7:K1 (strain IAI39 / ExPEC).